A 992-amino-acid chain; its full sequence is Disks large-associated protein 1 (992 aa).

2 disordered regions span residues 154–209 (SLEG…SWWS) and 355–375 (KAMGDEDSGDSDTSPKPSPKV). The residue at position 169 (S169) is a Phosphoserine. A compositionally biased stretch (low complexity) spans 195–209 (SNASNASPTSPSWWS). Phosphoserine is present on residues S362, S365, S368, S372, S389, S418, S421, S425, S428, S437, S509, S516, and S578. Position 579 is a phosphothreonine (T579). 2 positions are modified to phosphoserine: S581 and S605. T606 bears the Phosphothreonine mark. A phosphoserine mark is found at S608 and S611. Interaction with DYL2 regions lie at residues 665–676 (LSIGIQVDDAEE) and 687–698 (SKFQSVGVQVEE). Residues 914 to 980 (WKQMDPLDKK…QNSATESAES (67 aa)) are disordered. Composition is skewed to basic and acidic residues over residues 918-927 (DPLDKKERRA) and 943-958 (IRERSLESSQRQEARK). Residue S947 is modified to Phosphoserine. Positions 969–978 (VRQNSATESA) are enriched in polar residues. The short motif at 990–992 (TRL) is the PDZ-binding element.

It belongs to the SAPAP family. In terms of assembly, interacts with guanylate kinase-like domain of DLG1, DLG2, DLG3, DLG4 and AIP1. Interacts with the PDZ domain of SHANK1, SHANK2 and SHANK3. Found in a complex with DLG4 and SHANK1, SHANK2 or SHANK3. Found in a complex with DLG4 and BEGAIN. Interacts with DYL2 and LRFN1. Interacts with MPP2 (via the SH3-Guanylate kinase-like sub-module). In terms of processing, ubiquitinated by TRIM3; leading to proteasomal degradation. Expressed in brain and testis.

It localises to the cell membrane. Its subcellular location is the postsynaptic density. The protein localises to the synapse. In terms of biological role, part of the postsynaptic scaffold in neuronal cells. This is Disks large-associated protein 1 from Rattus norvegicus (Rat).